A 189-amino-acid chain; its full sequence is uncharacterized protein (189 aa).

This is an uncharacterized protein from Human adenovirus B serotype 7 (HAdV-7).